Consider the following 1064-residue polypeptide: Valine--tRNA ligase, mitochondrial (1064 aa).

Residues 1–26 (MPHLPLASFRPPFWGLRHSRGLPRFH) constitute a mitochondrion transit peptide. Residues 25–65 (FHSVSTQSEPHGSPISRRNREAKQKRLREKQATLETDIAGE) form a disordered region. Basic and acidic residues predominate over residues 42–56 (RNREAKQKRLREKQA). A 'HIGH' region motif is present at residues 146 to 156 (PNVTGSLHIGH). The 'KMSKS' region motif lies at 659-663 (KMSKS). An ATP-binding site is contributed by Lys662.

Belongs to the class-I aminoacyl-tRNA synthetase family.

It is found in the mitochondrion. It catalyses the reaction tRNA(Val) + L-valine + ATP = L-valyl-tRNA(Val) + AMP + diphosphate. Its function is as follows. Catalyzes the attachment of valine to tRNA(Val) in a two-step reaction: valine is first activated by ATP to form Val-AMP and then transferred to the acceptor end of tRNA(Val). This Macaca mulatta (Rhesus macaque) protein is Valine--tRNA ligase, mitochondrial (VARS2).